The sequence spans 641 residues: uncharacterized protein (641 aa).

S112 is modified (phosphoserine). 4 disordered regions span residues 118 to 243, 261 to 289, 355 to 386, and 404 to 430; these read STSI…LDPT, KSPR…TVSI, DKSD…RLEA, and DGEG…QSHS. The segment covering 132–162 has biased composition (polar residues); the sequence is ASVSSQYPHRTFQKQVNKTCVSKSDGPSGNG. S198 is modified (phosphoserine). Composition is skewed to polar residues over residues 222-234 and 278-289; these read NQEL…SRSN and RQASSAGDTVSI. Positions 355 to 368 are enriched in basic and acidic residues; it reads DKSDGDQREEDCVR. Composition is skewed to low complexity over residues 374-383 and 421-430; these read RSSSPTSPTR and SSSAAVQSHS.

This is an uncharacterized protein from Mus musculus (Mouse).